The primary structure comprises 133 residues: Ribosome-binding factor A (133 aa).

Belongs to the RbfA family. In terms of assembly, monomer. Binds 30S ribosomal subunits, but not 50S ribosomal subunits or 70S ribosomes.

Its subcellular location is the cytoplasm. Its function is as follows. One of several proteins that assist in the late maturation steps of the functional core of the 30S ribosomal subunit. Associates with free 30S ribosomal subunits (but not with 30S subunits that are part of 70S ribosomes or polysomes). Required for efficient processing of 16S rRNA. May interact with the 5'-terminal helix region of 16S rRNA. The protein is Ribosome-binding factor A of Bordetella bronchiseptica (strain ATCC BAA-588 / NCTC 13252 / RB50) (Alcaligenes bronchisepticus).